A 516-amino-acid polypeptide reads, in one-letter code: Flagellar radial spoke protein 3 (516 aa).

Composition is skewed to polar residues over residues 1-11 and 62-74; these read MVQAKAQQQLY and ATQT…SPAS. Disordered regions lie at residues 1–32, 60–90, 388–412, and 424–447; these read MVQA…EDET, ADAT…TPEA, NAKW…AAEE, and AAAE…DGVE. Residues 391-412 are compositionally biased toward basic and acidic residues; it reads WEADKAEAAEKARAEAEAAAEE.

The protein belongs to the flagellar radial spoke RSP3 family. In terms of assembly, interacts with FAP91. Protein 3 is one of the 5 radial spoke proteins that are phosphorylated. In terms of processing, protein 3a might only differ from protein 3 in being unphosphorylated.

It localises to the cytoplasm. The protein resides in the cytoskeleton. The protein localises to the flagellum axoneme. In terms of biological role, protein 3 may attach the radial spoke to the outer doublet microtubule or is required to form a stable spoke structure. Its function is as follows. Flagellar radial spokes contribute to the regulation of dynein arm activity and thus the pattern of flagellar bending. They consist of a thin stalk, which is attached to the a subfiber of the outer doublet microtubule, and a bulbous head, which is attached to the stalk and appears to interact with the projections from the central pair of microtubules. The polypeptide is Flagellar radial spoke protein 3 (Chlamydomonas reinhardtii (Chlamydomonas smithii)).